The chain runs to 402 residues: Propionate kinase (402 aa).

N11 and K18 together coordinate ATP. Mg(2+) is bound at residue N11. R86 contacts substrate. The active-site Proton donor/acceptor is the D143. ATP is bound by residues H175, 203–207, 278–280, and 326–330; these read HLGNG, DLR, and GIGEN.

This sequence belongs to the acetokinase family. TdcD subfamily. Homodimer. Mg(2+) is required as a cofactor.

It catalyses the reaction propanoate + ATP = propanoyl phosphate + ADP. It participates in amino-acid degradation; L-threonine degradation via propanoate pathway; propanoate from L-threonine: step 4/4. Its function is as follows. Catalyzes the conversion of propionyl phosphate and ADP to propionate and ATP. The protein is Propionate kinase of Escherichia coli O6:H1 (strain CFT073 / ATCC 700928 / UPEC).